The following is a 162-amino-acid chain: Cyclic pyranopterin monophosphate synthase (162 aa).

Residues 75–77 (LCH) and 113–114 (ME) contribute to the substrate site. Residue Asp128 is part of the active site.

Belongs to the MoaC family. In terms of assembly, homohexamer; trimer of dimers.

It catalyses the reaction (8S)-3',8-cyclo-7,8-dihydroguanosine 5'-triphosphate = cyclic pyranopterin phosphate + diphosphate. It functions in the pathway cofactor biosynthesis; molybdopterin biosynthesis. In terms of biological role, catalyzes the conversion of (8S)-3',8-cyclo-7,8-dihydroguanosine 5'-triphosphate to cyclic pyranopterin monophosphate (cPMP). The protein is Cyclic pyranopterin monophosphate synthase of Xanthobacter autotrophicus (strain ATCC BAA-1158 / Py2).